Consider the following 100-residue polypeptide: Histone H3-like 2 (100 aa).

The segment at 1–46 (MARMKHTARMSTGGKAPRKQLASKALRKAPPPPTKGVKQPTTTTSG) is disordered.

The protein belongs to the histone H3 family. As to quaternary structure, the nucleosome is a histone octamer containing two molecules each of H2A, H2B, H3 and H4 assembled in one H3-H4 heterotetramer and two H2A-H2B heterodimers. The octamer wraps approximately 147 bp of DNA. In terms of tissue distribution, pollen specific.

Its subcellular location is the nucleus. The protein localises to the chromosome. Core component of nucleosome. Nucleosomes wrap and compact DNA into chromatin, limiting DNA accessibility to the cellular machineries which require DNA as a template. Histones thereby play a central role in transcription regulation, DNA repair, DNA replication and chromosomal stability. DNA accessibility is regulated via a complex set of post-translational modifications of histones, also called histone code, and nucleosome remodeling. The sequence is that of Histone H3-like 2 (gcH3) from Lilium longiflorum (Trumpet lily).